The sequence spans 420 residues: Putative RNA-binding protein Alsin2 (420 aa).

A coiled-coil region spans residues 99-130; it reads IADCDRRTDSAKQRLKETQEELTAEVAEKANA. Basic and acidic residues-rich tracts occupy residues 242–259, 282–363, and 373–399; these read AELK…EGRG, RERQ…RFGD, and HHRD…HFRD. A disordered region spans residues 242–420; sequence AELKRTGKMT…SYSRERNYRR (179 aa).

Belongs to the Luc7 family. Interacts with x16 (via Arg/Ser-rich region).

In terms of biological role, may bind to RNA via its Arg/Ser-rich domain. The protein is Putative RNA-binding protein Alsin2 of Drosophila melanogaster (Fruit fly).